The sequence spans 351 residues: S-adenosylmethionine:tRNA ribosyltransferase-isomerase (351 aa).

Belongs to the QueA family. In terms of assembly, monomer.

The protein localises to the cytoplasm. It carries out the reaction 7-aminomethyl-7-carbaguanosine(34) in tRNA + S-adenosyl-L-methionine = epoxyqueuosine(34) in tRNA + adenine + L-methionine + 2 H(+). It participates in tRNA modification; tRNA-queuosine biosynthesis. Functionally, transfers and isomerizes the ribose moiety from AdoMet to the 7-aminomethyl group of 7-deazaguanine (preQ1-tRNA) to give epoxyqueuosine (oQ-tRNA). The chain is S-adenosylmethionine:tRNA ribosyltransferase-isomerase from Phocaeicola vulgatus (strain ATCC 8482 / DSM 1447 / JCM 5826 / CCUG 4940 / NBRC 14291 / NCTC 11154) (Bacteroides vulgatus).